The chain runs to 435 residues: MSIITDVYAREVLDSRGNPTLEVEVYTESGAFGRGMVPSGASTGEHEAVELRDGDKSRYLGLGTQKAVDNVNNIIAKAIIGYDVRDQQAIDRAMIALDGTPNKGKLGANAILGVSIAVARAAADYLEVPLYTYLGGFNTKVLPTPMMNIINGGSHSDAPIAFQEFMIMPVGAPTFKEGLRWGAEVFHALKKILKERGLVTAVGDEGGFAPKFEGTEDGVETILKAIEAAGYEAGENGIMIGFDCASSEFYDKERKVYDYTKFEGEGAAVRTSAEQVDYLEELVNKYPIITIEDGMDENDWDGWKVLTERLGKRVQLVGDDFFVTNTEYLARGIKENAANSILIKVNQIGTLTETFEAIEMAKEAGYTAVVSHRSGETEDSTIADIAVATNAGQIKTGSLSRTDRIAKYNQLLRIEDQLGEVAQYKGIKSFYNLKK.

Gln163 contacts (2R)-2-phosphoglycerate. Residue Glu205 is the Proton donor of the active site. Mg(2+)-binding residues include Asp243, Glu292, and Asp319. 4 residues coordinate (2R)-2-phosphoglycerate: Lys344, Arg373, Ser374, and Lys395. The active-site Proton acceptor is Lys344.

This sequence belongs to the enolase family. As to quaternary structure, homooctamer, a tetramer of homodimers. It depends on Mg(2+) as a cofactor.

Its subcellular location is the cytoplasm. The protein resides in the secreted. The protein localises to the cell surface. It is found in the cell wall. The enzyme catalyses (2R)-2-phosphoglycerate = phosphoenolpyruvate + H2O. It functions in the pathway carbohydrate degradation; glycolysis; pyruvate from D-glyceraldehyde 3-phosphate: step 4/5. In terms of biological role, catalyzes the reversible conversion of 2-phosphoglycerate (2-PG) into phosphoenolpyruvate (PEP). It is essential for the degradation of carbohydrates via glycolysis. 'Moonlights' as a plasminogen receptor. Binds plasminogen and more weakly plasmin when expressed on the bacterial cell surface; probably has more than one plasmin(ogen) binding site, may bind via Lys residues. Plasminogen binding potentially allows the bacterium to acquire surface-associated proteolytic activity, which in turn contributes to tissue invasion and virulence. The chain is Enolase from Streptococcus pyogenes serotype M6 (strain ATCC BAA-946 / MGAS10394).